The sequence spans 748 residues: Cytosolic phospholipase A2 (748 aa).

The interval 1–178 is phospholipid binding; sequence MSFIDPYQHI…MKSFLGEENS (178 aa). Residues 6 to 124 form the C2 domain; sequence PYQHIVVEHQ…GEKKEVQLTF (119 aa). Residues aspartate 40, threonine 41, aspartate 43, asparagine 65, aspartate 93, alanine 94, and asparagine 95 each coordinate Ca(2+). Positions 138 to 740 constitute a PLA2c domain; the sequence is VCSSTDLRFS…SSVEARRFFN (603 aa). The active-site Nucleophile is serine 228. Positions 431–459 are disordered; the sequence is SNDSSDSEDESQHPKGTENSEANEEYQNS. A compositionally biased stretch (polar residues) spans 449–459; sequence NSEANEEYQNS. Serine 505 bears the Phosphoserine; by MAPK mark. Catalysis depends on aspartate 549, which acts as the Proton acceptor.

Activated by phosphorylation on a serine residue.

The protein resides in the cytoplasm. The protein localises to the cytoplasmic vesicle. It catalyses the reaction a 1,2-diacyl-sn-glycero-3-phosphocholine + H2O = a 1-acyl-sn-glycero-3-phosphocholine + a fatty acid + H(+). It carries out the reaction a 1-acyl-sn-glycero-3-phosphocholine + H2O = sn-glycerol 3-phosphocholine + a fatty acid + H(+). Its activity is regulated as follows. Stimulated by agonists such as ATP, EGF, thrombin and bradykinin as well as by cytosolic Ca(2+). In terms of biological role, selectively hydrolyzes arachidonyl phospholipids in the sn-2 position releasing arachidonic acid. Together with its lysophospholipid activity, it is implicated in the initiation of the inflammatory response. The chain is Cytosolic phospholipase A2 (PLA2G4A) from Gallus gallus (Chicken).